A 540-amino-acid polypeptide reads, in one-letter code: MLO protein homolog 1 (540 aa).

The Extracellular portion of the chain corresponds to 1 to 16; sequence MAGGRSGSRELPETPT. A helical membrane pass occupies residues 17-37; it reads WAVAVVCAVLVLVSAAMEHGL. The Cytoplasmic portion of the chain corresponds to 38-60; sequence HNLSHWFRRRQKKAMGDALDKIK. A helical transmembrane segment spans residues 61–81; that stretch reads AELMLLGFISLLLTVAQAPIS. Topologically, residues 82–142 are extracellular; sequence KICIPKSAAN…MSAKSMHQLH (61 aa). The helical transmembrane segment at 143 to 163 threads the bilayer; it reads IFIFVLAVFHVTYCIITMGLG. Residues 164 to 265 lie on the Cytoplasmic side of the membrane; the sequence is RLKMKKWKKW…IKRSLEDDFK (102 aa). A helical transmembrane segment spans residues 266–286; the sequence is VVVGISLPLWFVGILVLFLDI. Position 287 (H287) is a topological domain, extracellular. A helical transmembrane segment spans residues 288 to 308; that stretch reads GLGTLIWISFVPLIIVLLVGT. Residues 309–347 are Cytoplasmic-facing; it reads KLEMVIMEMAQEIQDRATVIQGAPMVEPSNKYFWFNRPD. The chain crosses the membrane as a helical span at residues 348 to 368; it reads WVLFFIHLTLFHNAFQMAHFV. Topologically, residues 369-383 are extracellular; sequence WTMATPGLKKCFHEN. The chain crosses the membrane as a helical span at residues 384-404; that stretch reads IWLSIVEVIVGISLQVLCSYI. At 405–540 the chain is on the cytoplasmic side; the sequence is TFPLYALVTQ…DSDFSFSAQR (136 aa). The interval 426–447 is calmodulin-binding; it reads EQTMKALMNWRKKAMEKKKVRD. Residues 468–526 are disordered; the sequence is ASPVHLLQDHRARSDDPPSPITVASPPAPEEDMYPVPAAAASRQLLDDPPDRRWMASSS. Basic and acidic residues-rich tracts occupy residues 474-483 and 512-521; these read LQDHRARSDD and LLDDPPDRRW.

The protein belongs to the MLO family.

It is found in the membrane. May be involved in modulation of pathogen defense and leaf cell death. Activity seems to be regulated by Ca(2+)-dependent calmodulin binding and seems not to require heterotrimeric G proteins. The sequence is that of MLO protein homolog 1 (MLO1) from Oryza sativa subsp. indica (Rice).